A 78-amino-acid chain; its full sequence is Acyl carrier protein (78 aa).

The Carrier domain maps to 2 to 77; sequence DELFLRMRAL…DAYEFIKSKV (76 aa). Residue Ser-37 is modified to O-(pantetheine 4'-phosphoryl)serine.

It belongs to the acyl carrier protein (ACP) family. In terms of processing, 4'-phosphopantetheine is transferred from CoA to a specific serine of apo-ACP by AcpS. This modification is essential for activity because fatty acids are bound in thioester linkage to the sulfhydryl of the prosthetic group.

The protein resides in the cytoplasm. It participates in lipid metabolism; fatty acid biosynthesis. Its function is as follows. Carrier of the growing fatty acid chain in fatty acid biosynthesis. The chain is Acyl carrier protein from Treponema pallidum (strain Nichols).